The following is a 140-amino-acid chain: Nucleoside diphosphate kinase (140 aa).

6 residues coordinate ATP: lysine 11, phenylalanine 59, arginine 87, threonine 93, arginine 104, and asparagine 114. The active-site Pros-phosphohistidine intermediate is the histidine 117.

Belongs to the NDK family. Homotetramer. The cofactor is Mg(2+).

The protein localises to the cytoplasm. It carries out the reaction a 2'-deoxyribonucleoside 5'-diphosphate + ATP = a 2'-deoxyribonucleoside 5'-triphosphate + ADP. It catalyses the reaction a ribonucleoside 5'-diphosphate + ATP = a ribonucleoside 5'-triphosphate + ADP. Functionally, major role in the synthesis of nucleoside triphosphates other than ATP. The ATP gamma phosphate is transferred to the NDP beta phosphate via a ping-pong mechanism, using a phosphorylated active-site intermediate. The protein is Nucleoside diphosphate kinase of Rickettsia prowazekii (strain Madrid E).